Here is an 85-residue protein sequence, read N- to C-terminus: Large ribosomal subunit protein bL27 (85 aa).

A disordered region spans residues 1-21 (MAHKKAGGSTRNGRDSNAKRL).

The protein belongs to the bacterial ribosomal protein bL27 family.

This chain is Large ribosomal subunit protein bL27, found in Erwinia tasmaniensis (strain DSM 17950 / CFBP 7177 / CIP 109463 / NCPPB 4357 / Et1/99).